We begin with the raw amino-acid sequence, 432 residues long: MSLNIETTQGLERRVAITVPTEIVSKAIHEEFKRAAKNVRVDGFRKGHVPAHIIEQRFGASIRQDVLNDLLPRHFFDAVIAEKINIAGRPTFAIETFEEGKDLVFTATFEVYPEVKLQGLENIKVEKPTVEITEADIDKMIDVLRKQQATWAESQDIAKADDRVTIDFVGSVDGEEFEGGKATDFVLFMGQGRMIPGFEEGIVGHKAGEQFDIDVTFPAEYHAENLKGKAAKFAITLKKVENMVLPELTDEFVAKFGPNTKSVADLRAEIRKNMERELKNALVSRVKQQVINGLIEQNPIDVPASVVEEEINVLRNQAAQRFGGNTQQAAQLPRELFEAEATRRVQVGLLFSEVIKSNELKADKERAKAMIADIASAYEQPAEVVEYYSKNKELMNNIRNVVLEEQAVDAVLAKAQVTEKVSSFDEIMNPQA.

Residues 161 to 246 form the PPIase FKBP-type domain; that stretch reads DDRVTIDFVG…LKKVENMVLP (86 aa).

It belongs to the FKBP-type PPIase family. Tig subfamily.

Its subcellular location is the cytoplasm. The catalysed reaction is [protein]-peptidylproline (omega=180) = [protein]-peptidylproline (omega=0). In terms of biological role, involved in protein export. Acts as a chaperone by maintaining the newly synthesized protein in an open conformation. Functions as a peptidyl-prolyl cis-trans isomerase. This Haemophilus influenzae (strain PittGG) protein is Trigger factor.